A 782-amino-acid chain; its full sequence is DNA repair and recombination protein RAD54-like (782 aa).

The span at 1–20 (MRRSLAPSQRGGQRLSSRND) shows a compositional bias: polar residues. The segment at 1–28 (MRRSLAPSQRGGQRLSSRNDFTPPLLKK) is disordered. Residues 2–9 (RRSLAPSQ) form a required for chromatin remodeling, strand pairing activities and coupling of ATPase activity region. Residue T22 is modified to Phosphothreonine. Positions 168–343 (EGKRGNFNGC…FSLVNFVNPE (176 aa)) constitute a Helicase ATP-binding domain. ATP is bound at residue 181-188 (DEMGLGKT). A DEGH box motif is present at residues 294–297 (DEGH). One can recognise a Helicase C-terminal domain in the interval 501–658 (LLDFMLAAIR…NNESAEKHFT (158 aa)). Over residues 741–753 (SQKIETTPATETS) the composition is skewed to polar residues. The tract at residues 741–782 (SQKIETTPATETSVEAKPEPERRKRPAMPLSDDSADEDFQGF) is disordered. The segment covering 773-782 (DSADEDFQGF) has biased composition (acidic residues).

It belongs to the SNF2/RAD54 helicase family. As to quaternary structure, interacts (via N-terminus) with spn-A/Rad51.

It localises to the nucleus. Involved in mitotic DNA repair and meiotic recombination. Functions in the recombinational DNA repair pathway. Essential for interhomolog gene conversion (GC), but may have a less important role in intersister GC than spn-A/Rad51. In the presence of DNA, spn-A/Rad51 enhances the ATPase activity of okr/Rad54. In Drosophila pseudoobscura pseudoobscura (Fruit fly), this protein is DNA repair and recombination protein RAD54-like.